Reading from the N-terminus, the 1322-residue chain is Sal-like protein 1 (1322 aa).

A disordered region spans residues 1–41 (MSRRKQAKPQHFQSDPEVASLPRRDGDTEKGQPSRPTKSKD). Basic and acidic residues predominate over residues 22–41 (PRRDGDTEKGQPSRPTKSKD). The C2H2-type 1; atypical zinc finger occupies 43–65 (HVCGRCCAEFFELSDLLLHKKSC). The segment at 78–128 (PASPAKTFPPGPSLNDPDDQMKDAANKADQEDCSDLSEPKGLDREESMEVE) is disordered. Composition is skewed to basic and acidic residues over residues 96 to 107 (DQMKDAANKADQ) and 114 to 124 (SEPKGLDREES). A Glycyl lysine isopeptide (Lys-Gly) (interchain with G-Cter in SUMO2) cross-link involves residue lysine 440. C2H2-type zinc fingers lie at residues 450–472 (HKCR…LRSH) and 478–500 (FKCN…FQRH). The interval 578–659 (PIPISHSAAS…GGPGGTTFTN (82 aa)) is disordered. A compositionally biased stretch (polar residues) spans 584-594 (SAASPQGSVKS). A phosphoserine mark is found at serine 591, serine 594, and serine 596. Residues 629–645 (NMASSAVPTAGNSTLNS) show a composition bias toward polar residues. Glycyl lysine isopeptide (Lys-Gly) (interchain with G-Cter in SUMO2) cross-links involve residues lysine 672, lysine 689, and lysine 700. 3 consecutive C2H2-type zinc fingers follow at residues 705-727 (NECI…YRTH), 733-755 (FKCK…YSVH), and 765-787 (HSCP…IRMH). Disordered stretches follow at residues 789–855 (GGQI…SSPL) and 891–961 (SMEG…GLSP). Acidic residues predominate over residues 819-832 (DLDNFSDENMEECP). Over residues 842 to 855 (SADASQDSLSSSPL) the composition is skewed to low complexity. The span at 898–935 (TNDSSSVGGDMESQSAGSPAISESTSSMQALSPSNSTQ) shows a compositional bias: polar residues. Residues 936 to 948 (EFHKSPGMEEKPQ) show a composition bias toward basic and acidic residues. At serine 940 the chain carries Phosphoserine. Residues lysine 946 and lysine 981 each participate in a glycyl lysine isopeptide (Lys-Gly) (interchain with G-Cter in SUMO2) cross-link. 2 consecutive C2H2-type zinc fingers follow at residues 1000-1022 (TACD…YRSH) and 1028-1050 (FICT…MLTH). Lysine 1085 participates in a covalent cross-link: Glycyl lysine isopeptide (Lys-Gly) (interchain with G-Cter in SUMO2). The disordered stretch occupies residues 1094–1119 (VSPQDSKDAPTSHVPQGPLSSSATSP). 2 consecutive C2H2-type zinc fingers follow at residues 1133–1155 (HYCN…ERTH) and 1161–1183 (FACT…MGTH). Glycyl lysine isopeptide (Lys-Gly) (interchain with G-Cter in SUMO2) cross-links involve residues lysine 1218, lysine 1297, and lysine 1317.

The protein belongs to the sal C2H2-type zinc-finger protein family. May associate with NuRD histone deacetylase complex (HDAC). Interacts with components of HDAC complex including HDAC1, HDAC2, RBBP4, RBPP7, MTA1 and MTA2. Interacts with CCNQ. Interacts with NSD2 (via PHD-type zinc fingers 1, 2 and 3). Expressed in the metanephric mesenchyme surrounding ureteric bud.

It is found in the nucleus. Transcriptional repressor involved in organogenesis. Plays an essential role in ureteric bud invasion during kidney development. The chain is Sal-like protein 1 (Sall1) from Mus musculus (Mouse).